The following is a 100-amino-acid chain: MAKKSLIEKENSKKKLVKKYNLLRQFLRREIKNSLRIQDKLIISEKLQSLPRNSARVRLRNRCSLTGRPRSNYRDFGFSRHVLREMAHTCVLPGVLKSSW.

This sequence belongs to the universal ribosomal protein uS14 family. As to quaternary structure, part of the 30S ribosomal subunit.

It is found in the plastid. Its subcellular location is the chloroplast. Its function is as follows. Binds 16S rRNA, required for the assembly of 30S particles. The polypeptide is Small ribosomal subunit protein uS14c (Adiantum capillus-veneris (Maidenhair fern)).